Consider the following 702-residue polypeptide: MSITTKTFQFGNDTVTLETGRIARQATGAVLCTIGDAQVLATVVGAKSAKAGQDFFPLSVHYQERAYAVGKIPGGFLKREGRPSEKETLTSRLIDRPIRPLFPKGFMNEVQVVCTVMSTNTNLDADIAAMLATSAALTISGIPFNGPIGAARVGFNDESGYVLNPSYSDLDGSLLDMVVAGTKDAVLMVESEAQELTEDEMLGAVLYAHKEMQAAISAITEFAAECAKPRWDWEAEAANVSLADALQSGYAAQIEEAYGISEKMARYAQLGVVRDAAVAALVTEEGEFTEADVTGAFSKLEKRIVRRRVIDGKPRIDGRDNKTVRPINVEVGLLSKTHGSALFTRGETQAIATCTLGTSRDSQMTDGLTGESKDSFMLHYNFPPYSVGECGRMGGVGRREIGHGRLARRGVQAVLPSEDEFPYTIRVVSEITESNGSSSMASVCGASLSMMDAGVPLKAPVAGIAMGLIKEDDGFAVLTDILGDEDHLGDMDFKVAGTAEGITALQMDIKIEGINEEIMDIALSQALEARTHILREMAKVIGYARPEVSPNAPSMATIKIDPEKIRDVIGKGGATIRSITEQTGASIDLDDDGTVRIYAADKASSDAALLKIHEITAEAEVDKLYKGKVVRLAEFGAFVNILPGKDGLVHISQIAEERIRAVTDFLSEGQEVIVKVLDVDARGRIKLSMKDVTEEEKAAYTE.

Residues D486 and D492 each contribute to the Mg(2+) site. The KH domain occupies 553–612 (PSMATIKIDPEKIRDVIGKGGATIRSITEQTGASIDLDDDGTVRIYAADKASSDAALLKI). The S1 motif domain maps to 622–690 (DKLYKGKVVR…ARGRIKLSMK (69 aa)).

This sequence belongs to the polyribonucleotide nucleotidyltransferase family. In terms of assembly, component of the RNA degradosome, which is a multiprotein complex involved in RNA processing and mRNA degradation. Mg(2+) serves as cofactor.

It is found in the cytoplasm. It catalyses the reaction RNA(n+1) + phosphate = RNA(n) + a ribonucleoside 5'-diphosphate. In terms of biological role, involved in mRNA degradation. Catalyzes the phosphorolysis of single-stranded polyribonucleotides processively in the 3'- to 5'-direction. In Marinomonas sp. (strain MWYL1), this protein is Polyribonucleotide nucleotidyltransferase.